We begin with the raw amino-acid sequence, 222 residues long: Probable pyridoxal 5'-phosphate synthase subunit SNO2 (222 aa).

Residue 58 to 60 (GES) coordinates L-glutamine. Cys-91 serves as the catalytic Nucleophile. L-glutamine-binding positions include Arg-120 and 151–152 (IR). Catalysis depends on charge relay system residues His-197 and Glu-199.

Belongs to the glutaminase PdxT/SNO family.

The enzyme catalyses aldehydo-D-ribose 5-phosphate + D-glyceraldehyde 3-phosphate + L-glutamine = pyridoxal 5'-phosphate + L-glutamate + phosphate + 3 H2O + H(+). It carries out the reaction L-glutamine + H2O = L-glutamate + NH4(+). Its pathway is cofactor biosynthesis; pyridoxal 5'-phosphate biosynthesis. In terms of biological role, catalyzes the hydrolysis of glutamine to glutamate and ammonia as part of the biosynthesis of pyridoxal 5'-phosphate. The resulting ammonia molecule is channeled to the active site of a SNZ isoform. The chain is Probable pyridoxal 5'-phosphate synthase subunit SNO2 (SNO2) from Saccharomyces cerevisiae (strain ATCC 204508 / S288c) (Baker's yeast).